The following is a 318-amino-acid chain: Protoheme IX farnesyltransferase (318 aa).

The next 9 membrane-spanning stretches (helical) occupy residues 27-47 (IMML…GMTG), 52-72 (PAMA…AGAI), 103-123 (LTMG…ASNW), 124-144 (LAAA…TMWL), 152-172 (IVIG…AVTG), 179-199 (WILF…LSLL), 225-245 (ILVY…TGLG), 248-268 (IYGA…VAIL), and 288-308 (AFLF…VEHA).

Belongs to the UbiA prenyltransferase family. Protoheme IX farnesyltransferase subfamily. Interacts with CtaA.

It is found in the cell inner membrane. It catalyses the reaction heme b + (2E,6E)-farnesyl diphosphate + H2O = Fe(II)-heme o + diphosphate. It participates in porphyrin-containing compound metabolism; heme O biosynthesis; heme O from protoheme: step 1/1. Converts heme B (protoheme IX) to heme O by substitution of the vinyl group on carbon 2 of heme B porphyrin ring with a hydroxyethyl farnesyl side group. The polypeptide is Protoheme IX farnesyltransferase (Hyphomonas neptunium (strain ATCC 15444)).